The sequence spans 248 residues: MNRYYSNNQEITVSLIPRTERAAFLITPTSYGKSVLGAPLLYFPAQVESNSRGLILAGTHGDETASIAGLSCALRSLPAECLKHDVILSMNPDANQLGTRANANQVDLNRAFPTQNWTEHGTVYRWSSHTPVRDVKVKTGDKEQLEPEVDALISLIELRRPKFVVSFHEPLAFVDDPAHSDLAKWLGKQFNLPIVDDVDYETPGSFGTWCNERQLPCITVELPPISADLTIEKHLDAFIALLQHDPDL.

Residues 3-245 (RYYSNNQEIT…DAFIALLQHD (243 aa)) form the Peptidase M14 domain. 3 residues coordinate Zn(2+): His60, Glu63, and His168. Glu221 acts as the Proton donor/acceptor in catalysis.

Belongs to the peptidase M14 family. In terms of assembly, homodimer. Zn(2+) serves as cofactor.

It localises to the cytoplasm. It catalyses the reaction L-alanyl-gamma-D-glutamyl-meso-2,6-diaminopimelate + H2O = L-alanyl-D-glutamate + meso-2,6-diaminopimelate. The protein operates within cell wall degradation; peptidoglycan degradation. Functionally, involved in muropeptide degradation. Catalyzes the hydrolysis of the gamma-D-glutamyl-diaminopimelic acid (gamma-D-Glu-Dap) amide bond in the murein tripeptide L-alanyl-gamma-D-glutamyl-meso-diaminopimelic acid, leading to the formation of L-Ala-gamma-D-Glu and Dap. Has weak activity with L-Ala-gamma-D-Glu-L-Lys, MurNAc-tripeptide and gamma-D-Glu-meso-Dap. Cannot hydrolyze murein tetrapeptide. The sequence is that of Murein peptide amidase A from Vibrio campbellii (strain ATCC BAA-1116).